A 191-amino-acid chain; its full sequence is MHALEQKILTEGIVLSDQVLKVDAFLNHQIDPVLMQQIGKEFAARFKDAGITKIITIEASGIAPAIMAGLELGVPVIFARKYQSLTLKDDLYRAKVFSFTKQTESTIAISNKHINSSDKALVIDDFLANGQAALGLIDLIHQANAEVVGVGIVIEKSFQPGRDLLLEKGYRVESLARVQSLADGTVTFVKE.

Residues Leu20 and Asn27 each contribute to the xanthine site. 128-132 (ANGQA) serves as a coordination point for 5-phospho-alpha-D-ribose 1-diphosphate. Xanthine is bound at residue Lys156.

The protein belongs to the purine/pyrimidine phosphoribosyltransferase family. Xpt subfamily. In terms of assembly, homodimer.

The protein localises to the cytoplasm. It catalyses the reaction XMP + diphosphate = xanthine + 5-phospho-alpha-D-ribose 1-diphosphate. Its pathway is purine metabolism; XMP biosynthesis via salvage pathway; XMP from xanthine: step 1/1. In terms of biological role, converts the preformed base xanthine, a product of nucleic acid breakdown, to xanthosine 5'-monophosphate (XMP), so it can be reused for RNA or DNA synthesis. The sequence is that of Xanthine phosphoribosyltransferase from Acinetobacter baumannii (strain AB307-0294).